The sequence spans 279 residues: UPF0173 metal-dependent hydrolase MXAN_1394 (279 aa).

The protein belongs to the UPF0173 family.

The chain is UPF0173 metal-dependent hydrolase MXAN_1394 from Myxococcus xanthus (strain DK1622).